The following is a 272-amino-acid chain: D-aminoacyl-tRNA deacylase (272 aa).

In terms of assembly, monomer. Requires Zn(2+) as cofactor.

It carries out the reaction a D-aminoacyl-tRNA + H2O = a tRNA + a D-alpha-amino acid + H(+). The catalysed reaction is glycyl-tRNA(Ala) + H2O = tRNA(Ala) + glycine + H(+). The enzyme catalyses D-tyrosyl-tRNA(Tyr) + H2O = D-tyrosine + tRNA(Tyr). Its function is as follows. D-aminoacyl-tRNA deacylase with broad substrate specificity. By recycling D-aminoacyl-tRNA to D-amino acids and free tRNA molecules, this enzyme counteracts the toxicity associated with the formation of D-aminoacyl-tRNA entities in vivo. Catalyzes the hydrolysis of D-tyrosyl-tRNA(Tyr) and D-aspartyl-tRNA(Asp). The sequence is that of D-aminoacyl-tRNA deacylase from Pyrococcus abyssi (strain GE5 / Orsay).